The chain runs to 568 residues: 2-succinyl-5-enolpyruvyl-6-hydroxy-3-cyclohexene-1-carboxylate synthase (568 aa).

It belongs to the TPP enzyme family. MenD subfamily. As to quaternary structure, homodimer. The cofactor is Mg(2+). Mn(2+) is required as a cofactor. It depends on thiamine diphosphate as a cofactor.

It carries out the reaction isochorismate + 2-oxoglutarate + H(+) = 5-enolpyruvoyl-6-hydroxy-2-succinyl-cyclohex-3-ene-1-carboxylate + CO2. It functions in the pathway quinol/quinone metabolism; 1,4-dihydroxy-2-naphthoate biosynthesis; 1,4-dihydroxy-2-naphthoate from chorismate: step 2/7. It participates in quinol/quinone metabolism; menaquinone biosynthesis. In terms of biological role, catalyzes the thiamine diphosphate-dependent decarboxylation of 2-oxoglutarate and the subsequent addition of the resulting succinic semialdehyde-thiamine pyrophosphate anion to isochorismate to yield 2-succinyl-5-enolpyruvyl-6-hydroxy-3-cyclohexene-1-carboxylate (SEPHCHC). This Haemophilus influenzae (strain 86-028NP) protein is 2-succinyl-5-enolpyruvyl-6-hydroxy-3-cyclohexene-1-carboxylate synthase.